Here is a 123-residue protein sequence, read N- to C-terminus: Holo-[acyl-carrier-protein] synthase (123 aa).

Asp8 and Glu56 together coordinate Mg(2+).

It belongs to the P-Pant transferase superfamily. AcpS family. It depends on Mg(2+) as a cofactor.

Its subcellular location is the cytoplasm. It carries out the reaction apo-[ACP] + CoA = holo-[ACP] + adenosine 3',5'-bisphosphate + H(+). In terms of biological role, transfers the 4'-phosphopantetheine moiety from coenzyme A to a Ser of acyl-carrier-protein. This is Holo-[acyl-carrier-protein] synthase from Clostridium botulinum (strain Eklund 17B / Type B).